Reading from the N-terminus, the 356-residue chain is Calcium/calmodulin-dependent protein kinase type 1 (356 aa).

The Nuclear localization signal signature appears at 2-7 (PLFKRR). Residues 22-278 (YDFRDVLGTG…CQSALEHPWI (257 aa)) enclose the Protein kinase domain. ATP is bound by residues 28-36 (LGTGAFSKV) and K52. D144 functions as the Proton acceptor in the catalytic mechanism. A Phosphothreonine; by ckk-1 modification is found at T179. The tract at residues 278–318 (ISGNTAYTHDIHRTVAVHLKKSLAKRNWKKAFNAAAAIRQL) is autoinhibitory domain. Residues 298 to 319 (KSLAKRNWKKAFNAAAAIRQLQ) are calmodulin-binding.

This sequence belongs to the protein kinase superfamily. CAMK Ser/Thr protein kinase family. CaMK subfamily. It depends on Mg(2+) as a cofactor.

It localises to the nucleus. The protein localises to the cytoplasm. It carries out the reaction L-seryl-[protein] + ATP = O-phospho-L-seryl-[protein] + ADP + H(+). It catalyses the reaction L-threonyl-[protein] + ATP = O-phospho-L-threonyl-[protein] + ADP + H(+). Activated by Ca(2+)/calmodulin. Binding of calmodulin results in a conformational change that generates functional binding sites for both substrate and ATP, and thus relieves autoinhibition and lowers the Km of substrate binding. Must be phosphorylated by ckk-1 to be maximally active but this does not appear to be required for activity in AFD neurons. Its function is as follows. Calcium/calmodulin-dependent protein kinase that operates in the calcium-triggered CaMKK-CaMK1 signaling cascade which results in transcriptional activation. Transcriptional activation occurs at least in part through phosphorylation of crh-1. Regulates gene expression, sensory morphology, and function of the AFD thermosensory neurons. Involved in long-term adaptation of AFD neurons to temperatures warmer than the initial acclimatized cultivation temperature. Acts in the FLP thermal nociceptors to moderate the responsiveness to noxious heat and controls neuropeptide release from FLP neurons in response to temperature elevations. Regulates the dauer decision, the decision of the larvae to enter into the alternative stress-resistant and long-lived dauer developmental stage, based on the feeding state, primarily in the AWC sensory neurons. Acts non cell-autonomously in the AWC neurons to regulate expression of the daf-28 insulin-like peptide and cell-autonomously in the ASI sensory neurons to regulate expression of the growth promoting daf-7 in a food-regulated manner. Plays a role in memory-based thermal response of an individual AFD neuron cell. Involved in chemotaxis response in AWC neurons to attractant 2-heptanone, a volatile organic compound emitted by the nematode pathogenic bacterium B.nematocida B16. Represses transcription of glutamate receptor glr-1 in the nucleus basally and in response to change in synaptic activity. The polypeptide is Calcium/calmodulin-dependent protein kinase type 1 (cmk-1) (Caenorhabditis briggsae).